The primary structure comprises 602 residues: Elongation factor 4 (602 aa).

One can recognise a tr-type G domain in the interval 7–189; it reads SKIRNFCIIA…AIVRRVPAPQ (183 aa). Residues 19–24 and 136–139 contribute to the GTP site; these read DHGKST and NKVD.

The protein belongs to the TRAFAC class translation factor GTPase superfamily. Classic translation factor GTPase family. LepA subfamily.

It is found in the cell inner membrane. It catalyses the reaction GTP + H2O = GDP + phosphate + H(+). In terms of biological role, required for accurate and efficient protein synthesis under certain stress conditions. May act as a fidelity factor of the translation reaction, by catalyzing a one-codon backward translocation of tRNAs on improperly translocated ribosomes. Back-translocation proceeds from a post-translocation (POST) complex to a pre-translocation (PRE) complex, thus giving elongation factor G a second chance to translocate the tRNAs correctly. Binds to ribosomes in a GTP-dependent manner. This chain is Elongation factor 4, found in Prochlorococcus marinus (strain MIT 9312).